Reading from the N-terminus, the 477-residue chain is Cysteine--tRNA ligase (477 aa).

Cys-28 lines the Zn(2+) pocket. The 'HIGH' region motif lies at 30–40 (PTVYDYPHLGH). 3 residues coordinate Zn(2+): Cys-208, His-233, and Glu-237. The 'KMSKS' region motif lies at 265–269 (KMSKS). Lys-268 is an ATP binding site.

This sequence belongs to the class-I aminoacyl-tRNA synthetase family. The cofactor is Zn(2+).

It is found in the cytoplasm. The enzyme catalyses tRNA(Cys) + L-cysteine + ATP = L-cysteinyl-tRNA(Cys) + AMP + diphosphate. This Pyrococcus furiosus (strain ATCC 43587 / DSM 3638 / JCM 8422 / Vc1) protein is Cysteine--tRNA ligase.